The chain runs to 261 residues: Zinc import ATP-binding protein ZnuC (261 aa).

The 216-residue stretch at 6 to 221 (IRLEQVGVTF…PAFVELFGKN (216 aa)) folds into the ABC transporter domain. 38–45 (GPNGAGKT) contacts ATP.

The protein belongs to the ABC transporter superfamily. Zinc importer (TC 3.A.1.15.5) family. In terms of assembly, the complex is composed of two ATP-binding proteins (ZnuC), two transmembrane proteins (ZnuB) and a solute-binding protein (ZnuA).

It is found in the cell inner membrane. The enzyme catalyses Zn(2+)(out) + ATP(in) + H2O(in) = Zn(2+)(in) + ADP(in) + phosphate(in) + H(+)(in). In terms of biological role, part of the ABC transporter complex ZnuABC involved in zinc import. Responsible for energy coupling to the transport system. This chain is Zinc import ATP-binding protein ZnuC, found in Pseudomonas fluorescens (strain ATCC BAA-477 / NRRL B-23932 / Pf-5).